Consider the following 518-residue polypeptide: G-protein coupled receptor 161 (518 aa).

At 1–26 (MNSSSDGANEGAGAAADNGPTKVAES) the chain is on the extracellular side. N-linked (GlcNAc...) asparagine glycosylation is present at N2. Residues 27-47 (IAIIIIDILICLGNLVIVVTL) traverse the membrane as a helical segment. Over 48–59 (YKKSYLLSLSNK) the chain is Cytoplasmic. Residues 60–80 (FVFSLTFSNLLLSMLVLPFVV) traverse the membrane as a helical segment. Residues 81 to 97 (VSSILREWIFGVVWCNF) are Extracellular-facing. C95 and C173 are joined by a disulfide. N-linked (GlcNAc...) asparagine glycosylation occurs at N96. A helical transmembrane segment spans residues 98–118 (SALLYMLISSASMLTLGIIAI). The Cytoplasmic segment spans residues 119-138 (DRYYAVLYPMVYPMKITGNR). Residues 139 to 159 (AVLALVYVWLHSLIGCLPPLF) form a helical membrane-spanning segment. The Extracellular segment spans residues 160 to 185 (GWSTLEFDHFKWMCVAAWHKEAGYTA). The helical transmembrane segment at 186-206 (FWQVWCALLPFIVMMICYGFI) threads the bilayer. Residues 207-264 (FRVARIKARKIHCGTVIIVQEASQKNGRKNSSTSTSSSGSRKNGFSSIVYSANQCKAL) lie on the Cytoplasmic side of the membrane. Residues 265 to 285 (ITILVVIGAFVLTWGPYMIVI) form a helical membrane-spanning segment. At 286 to 301 (STEALKGKNSVSPVLE) the chain is on the extracellular side. A helical membrane pass occupies residues 302–322 (TLATWLSFTSAICHPLIYGLW). Residues 323–518 (NKTVRKELLG…GNIETSKCDV (196 aa)) lie on the Cytoplasmic side of the membrane. Positions 429-448 (EVEQKNDARTMPTQPTAPSE) are disordered. The segment covering 439-448 (MPTQPTAPSE) has biased composition (polar residues).

This sequence belongs to the G-protein coupled receptor 1 family.

It is found in the cell projection. The protein localises to the cilium membrane. It localises to the cell membrane. In terms of biological role, key negative regulator of Shh signaling during neural tube development. Recruited to primary cilia and acts as a regulator of the PKA-dependent basal repression machinery in Shh signaling by increasing cAMP levels, leading to promote the PKA-dependent processing of gli3 into gli3r and repress the Shh signaling. In presence of shh, it is removed from primary cilia, preventing its activity and allowing activation of the Shh signaling. The chain is G-protein coupled receptor 161 (gpr161) from Xenopus tropicalis (Western clawed frog).